The sequence spans 213 residues: UPF0301 protein RPC_0788 (213 aa).

Residues 1 to 20 (MDPKSKAPKRDETKGADDAS) are disordered.

This sequence belongs to the UPF0301 (AlgH) family.

This is UPF0301 protein RPC_0788 from Rhodopseudomonas palustris (strain BisB18).